The chain runs to 430 residues: Glutamate-1-semialdehyde 2,1-aminomutase (430 aa).

Lys265 carries the N6-(pyridoxal phosphate)lysine modification.

It belongs to the class-III pyridoxal-phosphate-dependent aminotransferase family. HemL subfamily. As to quaternary structure, homodimer. Pyridoxal 5'-phosphate serves as cofactor.

It is found in the cytoplasm. The catalysed reaction is (S)-4-amino-5-oxopentanoate = 5-aminolevulinate. Its pathway is porphyrin-containing compound metabolism; protoporphyrin-IX biosynthesis; 5-aminolevulinate from L-glutamyl-tRNA(Glu): step 2/2. This Shewanella sp. (strain ANA-3) protein is Glutamate-1-semialdehyde 2,1-aminomutase.